A 185-amino-acid polypeptide reads, in one-letter code: uncharacterized protein (185 aa).

A disordered region spans residues 160–185 (QYTGPAVPSVPTTNLNDIGDPTKTVQ).

This is an uncharacterized protein from Saccharomyces cerevisiae (strain ATCC 204508 / S288c) (Baker's yeast).